The sequence spans 872 residues: Alanine--tRNA ligase (872 aa).

Residues histidine 567, histidine 571, cysteine 669, and histidine 673 each coordinate Zn(2+).

It belongs to the class-II aminoacyl-tRNA synthetase family. It depends on Zn(2+) as a cofactor.

The protein resides in the cytoplasm. It carries out the reaction tRNA(Ala) + L-alanine + ATP = L-alanyl-tRNA(Ala) + AMP + diphosphate. Catalyzes the attachment of alanine to tRNA(Ala) in a two-step reaction: alanine is first activated by ATP to form Ala-AMP and then transferred to the acceptor end of tRNA(Ala). Also edits incorrectly charged Ser-tRNA(Ala) and Gly-tRNA(Ala) via its editing domain. This chain is Alanine--tRNA ligase, found in Streptococcus agalactiae serotype V (strain ATCC BAA-611 / 2603 V/R).